Consider the following 231-residue polypeptide: PIAGSMVLAAILLKLGGYGIIRMMQTLPTTKTDMFIPFIVLALWGAILANLTCLQQTDLKSLIAYSSISHMGLVVATIIIQTPWGLSGAMALMIAHGFTSSALFCLANTTYERTHTRILILTRGFHNILPMTTTWWLLANLMNIAMPPTLNFTGELLIMSTLFNWCPTTIIMLGLSMLITASYSLHMFLSTQMGPTPLNSQTEPTHSREHLLMTLHLFPLMLISLKPELVI.

Helical transmembrane passes span proline 1 to isoleucine 21, methionine 34 to leucine 54, isoleucine 63 to glycine 85, alanine 89 to tyrosine 111, isoleucine 128 to proline 148, and threonine 169 to leucine 189.

This sequence belongs to the complex I subunit 4 family.

The protein resides in the mitochondrion membrane. The catalysed reaction is a ubiquinone + NADH + 5 H(+)(in) = a ubiquinol + NAD(+) + 4 H(+)(out). Core subunit of the mitochondrial membrane respiratory chain NADH dehydrogenase (Complex I) that is believed to belong to the minimal assembly required for catalysis. Complex I functions in the transfer of electrons from NADH to the respiratory chain. The immediate electron acceptor for the enzyme is believed to be ubiquinone. The polypeptide is NADH-ubiquinone oxidoreductase chain 4 (MT-ND4) (Lachesis muta muta (Bushmaster)).